An 823-amino-acid polypeptide reads, in one-letter code: Leucine--tRNA ligase (823 aa).

The 'HIGH' region motif lies at 42–52 (PYPSGTLHMGH). The short motif at 575–579 (KMSKS) is the 'KMSKS' region element. Lys578 serves as a coordination point for ATP.

Belongs to the class-I aminoacyl-tRNA synthetase family.

It is found in the cytoplasm. It carries out the reaction tRNA(Leu) + L-leucine + ATP = L-leucyl-tRNA(Leu) + AMP + diphosphate. The chain is Leucine--tRNA ligase from Legionella pneumophila (strain Lens).